Consider the following 1094-residue polypeptide: Carbamoyl phosphate synthase large chain (1094 aa).

Positions 1–402 are carboxyphosphate synthetic domain; that stretch reads MPRRSDLHRI…AFQKALRALE (402 aa). The ATP site is built by R129, R169, G175, G176, R208, L210, E215, G241, V242, H243, Q285, and E299. The 196-residue stretch at 133–328 folds into the ATP-grasp 1 domain; sequence GEAMEKIGLR…IARIGAKLAV (196 aa). Mg(2+) contacts are provided by Q285, E299, and N301. Residues Q285, E299, and N301 each coordinate Mn(2+). The interval 403 to 552 is oligomerization domain; it reads TGRSGWTIAE…YLYGNYDEES (150 aa). Residues 553 to 936 form a carbamoyl phosphate synthetic domain region; it reads EAATEGRKKV…AFMKSQLAAD (384 aa). The ATP-grasp 2 domain maps to 679 to 870; the sequence is EAIARELGIE…LPSVAARLML (192 aa). Positions 715, 754, 756, 761, 786, 787, 788, 789, 829, and 841 each coordinate ATP. Residues Q829, E841, and N843 each coordinate Mg(2+). Residues Q829, E841, and N843 each coordinate Mn(2+). The MGS-like domain maps to 937–1077; the sequence is NALPREGTVF…QEWHEILRAP (141 aa). Residues 937–1094 form an allosteric domain region; the sequence is NALPREGTVF…AGSTQPAGVA (158 aa).

Belongs to the CarB family. Composed of two chains; the small (or glutamine) chain promotes the hydrolysis of glutamine to ammonia, which is used by the large (or ammonia) chain to synthesize carbamoyl phosphate. Tetramer of heterodimers (alpha,beta)4. The cofactor is Mg(2+). Mn(2+) serves as cofactor.

It catalyses the reaction hydrogencarbonate + L-glutamine + 2 ATP + H2O = carbamoyl phosphate + L-glutamate + 2 ADP + phosphate + 2 H(+). The catalysed reaction is hydrogencarbonate + NH4(+) + 2 ATP = carbamoyl phosphate + 2 ADP + phosphate + 2 H(+). It participates in amino-acid biosynthesis; L-arginine biosynthesis; carbamoyl phosphate from bicarbonate: step 1/1. Its pathway is pyrimidine metabolism; UMP biosynthesis via de novo pathway; (S)-dihydroorotate from bicarbonate: step 1/3. Functionally, large subunit of the glutamine-dependent carbamoyl phosphate synthetase (CPSase). CPSase catalyzes the formation of carbamoyl phosphate from the ammonia moiety of glutamine, carbonate, and phosphate donated by ATP, constituting the first step of 2 biosynthetic pathways, one leading to arginine and/or urea and the other to pyrimidine nucleotides. The large subunit (synthetase) binds the substrates ammonia (free or transferred from glutamine from the small subunit), hydrogencarbonate and ATP and carries out an ATP-coupled ligase reaction, activating hydrogencarbonate by forming carboxy phosphate which reacts with ammonia to form carbamoyl phosphate. This chain is Carbamoyl phosphate synthase large chain, found in Gemmatimonas aurantiaca (strain DSM 14586 / JCM 11422 / NBRC 100505 / T-27).